We begin with the raw amino-acid sequence, 456 residues long: MSKSIEKMISHLKNQGFVFQGSEIYGGLANSWDYGPLGCEVKNKLKKVWWDFFVKKNPLNIGLDSSIILNSKVWKASGHIDGFNDPLIDCKNCKSRWRADKLIEEFDPSINTGIMSNLQLEEYINQNNIVCKKCQKKDFTQIRKFALMFKTNQGVLEDDSSIVYLRPETAQGIFINFKNVQRSMRKKLPFGIGQIGKSFRNEITPGNFIFRTREFEQMELEFFFDPNDSNDWFKYWLEQIEIFLTQKISLDKNNYKIRENLKDELAHYALKTSDIEFNFPFGWGELWGISHRSDFDLKVHQNLSKEDLTVLKEENNQKILANVIEPSVGVERLMLAIFWQAYTEEQLEENNSRIVLKLPYNLAPYQVAITPLSKQLNQNANQLFLELLKDFDAIYDETGNIGKRYRRQDAIGTPFVITYDFQTLEDQKVTIRYRDTMKQERILISQLKDFLNSQFN.

Residues R98 and E168 each contribute to the substrate site. Residues 200–202 (RNE), 210–215 (FRTREF), 285–286 (EL), and 329–332 (GVER) contribute to the ATP site. 215–219 (FEQME) contributes to the substrate binding site. Residue 325–329 (EPSVG) coordinates substrate.

Belongs to the class-II aminoacyl-tRNA synthetase family. Homodimer.

Its subcellular location is the cytoplasm. The catalysed reaction is tRNA(Gly) + glycine + ATP = glycyl-tRNA(Gly) + AMP + diphosphate. In terms of biological role, catalyzes the attachment of glycine to tRNA(Gly). This Mycoplasma capricolum subsp. capricolum (strain California kid / ATCC 27343 / NCTC 10154) protein is Glycine--tRNA ligase.